Reading from the N-terminus, the 128-residue chain is Flagellar assembly factor FliW 1 (128 aa).

It belongs to the FliW family. As to quaternary structure, interacts with translational regulator CsrA and flagellin(s).

Its subcellular location is the cytoplasm. In terms of biological role, acts as an anti-CsrA protein, binds CsrA and prevents it from repressing translation of its target genes, one of which is flagellin. Binds to flagellin and participates in the assembly of the flagellum. The protein is Flagellar assembly factor FliW 1 of Wolinella succinogenes (strain ATCC 29543 / DSM 1740 / CCUG 13145 / JCM 31913 / LMG 7466 / NCTC 11488 / FDC 602W) (Vibrio succinogenes).